The primary structure comprises 222 residues: Glutathione-specific gamma-glutamylcyclotransferase 1 (222 aa).

The interval 1–25 is disordered; sequence MKQESAAQSTPPPSLSPAPSAQPSW. Residue 35–40 participates in substrate binding; the sequence is IFGYGS. The active-site Proton acceptor is the E115.

Belongs to the gamma-glutamylcyclotransferase family. ChaC subfamily. In terms of assembly, interacts with NOTCH1 (via extracellular region).

The protein resides in the cytoplasm. It is found in the cytosol. It localises to the golgi apparatus. Its subcellular location is the trans-Golgi network. It catalyses the reaction glutathione = L-cysteinylglycine + 5-oxo-L-proline. Functionally, catalyzes the cleavage of glutathione into 5-oxo-L-proline and a Cys-Gly dipeptide. Acts specifically on glutathione, but not on other gamma-glutamyl peptides. Glutathione depletion is an important factor for apoptosis initiation and execution. Acts as a pro-apoptotic component of the unfolded protein response pathway by mediating the pro-apoptotic effects of the ATF4-ATF3-DDIT3/CHOP cascade. Negative regulator of Notch signaling pathway involved in embryonic neurogenesis: acts by inhibiting Notch cleavage by furin, maintaining Notch in an immature inactive form, thereby promoting neurogenesis in embryos. This chain is Glutathione-specific gamma-glutamylcyclotransferase 1, found in Rattus norvegicus (Rat).